Here is a 213-residue protein sequence, read N- to C-terminus: Na(+)-translocating NADH-quinone reductase subunit D (213 aa).

The next 6 membrane-spanning stretches (helical) occupy residues 21 to 41 (PLIAILGICSALAVTTTVKTA), 42 to 62 (ITMGLAVSFVTGCSSFFVSLL), 77 to 97 (IIISLFVIVIDQFLKAFFFNI), 101 to 121 (LSVFVGLIITNCIVMGRAESL), 131 to 151 (FLDGLASGLGYGWVLVFVSII), and 183 to 203 (FGLMVLAPSAFFLLGIMIWVV).

This sequence belongs to the NqrDE/RnfAE family. In terms of assembly, composed of six subunits; NqrA, NqrB, NqrC, NqrD, NqrE and NqrF.

Its subcellular location is the cell inner membrane. The catalysed reaction is a ubiquinone + n Na(+)(in) + NADH + H(+) = a ubiquinol + n Na(+)(out) + NAD(+). Functionally, NQR complex catalyzes the reduction of ubiquinone-1 to ubiquinol by two successive reactions, coupled with the transport of Na(+) ions from the cytoplasm to the periplasm. NqrA to NqrE are probably involved in the second step, the conversion of ubisemiquinone to ubiquinol. This is Na(+)-translocating NADH-quinone reductase subunit D from Chlamydia felis (strain Fe/C-56) (Chlamydophila felis).